We begin with the raw amino-acid sequence, 257 residues long: Phosphatidylglycerol--prolipoprotein diacylglyceryl transferase (257 aa).

A run of 7 helical transmembrane segments spans residues 13-33 (FGPI…AVGG), 49-69 (FLLN…RLMF), 88-108 (IYEG…AGLY), 123-143 (FAVV…IFNH), 152-172 (FFFG…FLLI), 186-202 (YQFW…RGVF), and 223-243 (IGLF…AYWM). An a 1,2-diacyl-sn-glycero-3-phospho-(1'-sn-glycerol)-binding site is contributed by Arg136.

It belongs to the Lgt family.

It localises to the cell membrane. It carries out the reaction L-cysteinyl-[prolipoprotein] + a 1,2-diacyl-sn-glycero-3-phospho-(1'-sn-glycerol) = an S-1,2-diacyl-sn-glyceryl-L-cysteinyl-[prolipoprotein] + sn-glycerol 1-phosphate + H(+). It participates in protein modification; lipoprotein biosynthesis (diacylglyceryl transfer). In terms of biological role, catalyzes the transfer of the diacylglyceryl group from phosphatidylglycerol to the sulfhydryl group of the N-terminal cysteine of a prolipoprotein, the first step in the formation of mature lipoproteins. This Caldanaerobacter subterraneus subsp. tengcongensis (strain DSM 15242 / JCM 11007 / NBRC 100824 / MB4) (Thermoanaerobacter tengcongensis) protein is Phosphatidylglycerol--prolipoprotein diacylglyceryl transferase.